Reading from the N-terminus, the 248-residue chain is MDIVVDSHTHTIASGHAYSTILENALAAKNKGLKLLCTTDHAPEMPGAPHYWHFNNQRILPRFLHEVGILRGVEANTLNVKGEIDLPLSSDQHLDWVIASFHEPVFRPATEAEHTAALINVIKSGRVDVLGHLGNPNYPFDMEQVLRCAKSHNVAIEVNNTSLTGKSRKGSDARCDQIVALGKEIGVYFSTGSDAHFCEEISKLDLAIELLEKHGVEKDKILTTSTRRFLKFLLLRGKPRIPEFDAFY.

Residues H8, H10, H16, H41, E74, H102, H132, D194, and H196 each coordinate Zn(2+).

This sequence belongs to the PHP family. Zn(2+) serves as cofactor.

In Vibrio parahaemolyticus serotype O3:K6 (strain RIMD 2210633), this protein is Probable phosphatase VPA0505.